The primary structure comprises 162 residues: Phosphopantetheine adenylyltransferase (162 aa).

S9 serves as a coordination point for substrate. Residues S9 to F10 and H17 each bind ATP. K41, I77, and K91 together coordinate substrate. ATP-binding positions include G92 to R94, E102, and Y126 to S132.

Belongs to the bacterial CoaD family. Homohexamer. Mg(2+) is required as a cofactor.

It localises to the cytoplasm. The catalysed reaction is (R)-4'-phosphopantetheine + ATP + H(+) = 3'-dephospho-CoA + diphosphate. It participates in cofactor biosynthesis; coenzyme A biosynthesis; CoA from (R)-pantothenate: step 4/5. In terms of biological role, reversibly transfers an adenylyl group from ATP to 4'-phosphopantetheine, yielding dephospho-CoA (dPCoA) and pyrophosphate. This is Phosphopantetheine adenylyltransferase from Frankia casuarinae (strain DSM 45818 / CECT 9043 / HFP020203 / CcI3).